The following is a 225-amino-acid chain: Membrane protein (225 aa).

Over 1 to 20 (MSNETNCTLDFEQSVELFKE) the chain is Virion surface. The helical transmembrane segment at 21-41 (YNLFITAFLLFLTIILQYGYA) threads the bilayer. The Intravirion segment spans residues 42–51 (TRSKFIYILK). The helical transmembrane segment at 52–72 (MIVLWCFWPLNIAVGVISCIY) threads the bilayer. At 73–77 (PPNTG) the chain is on the virion surface side. The helical transmembrane segment at 78–98 (GLVAAIILTVFACLSFVGYWI) threads the bilayer. Residues 99-225 (QSIRLFKRCR…VATGGSSLYT (127 aa)) lie on the Intravirion side of the membrane.

Belongs to the gammacoronaviruses M protein family. Homomultimer. Interacts with envelope E protein in the budding compartment of the host cell, which is located between endoplasmic reticulum and the Golgi complex. Forms a complex with HE and S proteins. Interacts with nucleocapsid N protein. This interaction probably participates in RNA packaging into the virus.

The protein resides in the virion membrane. It localises to the host Golgi apparatus membrane. In terms of biological role, component of the viral envelope that plays a central role in virus morphogenesis and assembly via its interactions with other viral proteins. The sequence is that of Membrane protein from Gallus gallus (Chicken).